We begin with the raw amino-acid sequence, 40 residues long: Photosystem II reaction center protein J (40 aa).

Residues 8–28 traverse the membrane as a helical segment; that stretch reads IPLWLIGTVAGIPVIGLVGVF.

This sequence belongs to the PsbJ family. In terms of assembly, PSII is composed of 1 copy each of membrane proteins PsbA, PsbB, PsbC, PsbD, PsbE, PsbF, PsbH, PsbI, PsbJ, PsbK, PsbL, PsbM, PsbT, PsbX, PsbY, PsbZ, Psb30/Ycf12, at least 3 peripheral proteins of the oxygen-evolving complex and a large number of cofactors. It forms dimeric complexes.

The protein resides in the plastid. It localises to the chloroplast thylakoid membrane. Functionally, one of the components of the core complex of photosystem II (PSII). PSII is a light-driven water:plastoquinone oxidoreductase that uses light energy to abstract electrons from H(2)O, generating O(2) and a proton gradient subsequently used for ATP formation. It consists of a core antenna complex that captures photons, and an electron transfer chain that converts photonic excitation into a charge separation. This is Photosystem II reaction center protein J from Hordeum jubatum (Foxtail barley).